Consider the following 382-residue polypeptide: Alpha-methylacyl-CoA racemase (382 aa).

Substrate-binding positions include arginine 36 and 55–58 (LDLK). Lysine 58 is subject to N6-acetyllysine. The residue at position 87 (lysine 87) is an N6-acetyllysine; alternate. Lysine 87 carries the N6-succinyllysine; alternate modification. Position 121-126 (121-126 (GHDINY)) interacts with substrate. Histidine 122 acts as the Proton acceptor in catalysis. Aspartate 152 serves as the catalytic Proton donor. N6-succinyllysine is present on lysine 268. The Microbody targeting signal signature appears at 380 to 382 (ASL).

The protein belongs to the CoA-transferase III family. In terms of assembly, monomer.

Its subcellular location is the peroxisome. The protein resides in the mitochondrion. The enzyme catalyses a (2S)-2-methylacyl-CoA = a (2R)-2-methylacyl-CoA. It catalyses the reaction (25R)-3alpha,7alpha,12alpha-trihydroxy-5beta-cholestan-26-oyl-CoA = (25S)-3alpha,7alpha,12alpha-trihydroxy-5beta-cholestan-26-oyl-CoA. The catalysed reaction is (2R,6)-dimethylheptanoyl-CoA = (2S,6)-dimethylheptanoyl-CoA. It participates in lipid metabolism; bile acid biosynthesis. It functions in the pathway lipid metabolism; fatty acid metabolism. Its function is as follows. Catalyzes the interconversion of (R)- and (S)-stereoisomers of alpha-methyl-branched-chain fatty acyl-CoA esters. Acts only on coenzyme A thioesters, not on free fatty acids, and accepts as substrates a wide range of alpha-methylacyl-CoAs, including pristanoyl-CoA, trihydroxycoprostanoyl-CoA (an intermediate in bile acid synthesis), and arylpropionic acids like the anti-inflammatory drug ibuprofen (2-(4-isobutylphenyl)propionic acid) but neither 3-methyl-branched nor linear-chain acyl-CoAs. The sequence is that of Alpha-methylacyl-CoA racemase (AMACR) from Homo sapiens (Human).